The primary structure comprises 433 residues: Protein FAM98B (433 aa).

Residues 303-433 (GRVPDRGGRP…GGGGGGYRRY (131 aa)) form a disordered region. Over residues 305-314 (VPDRGGRPNE) the composition is skewed to basic and acidic residues. Residues 331 to 433 (GGGGRGGWGG…GGGGGGYRRY (103 aa)) are compositionally biased toward gly residues.

This sequence belongs to the FAM98 family. As to quaternary structure, homodimer. Component of the tRNA-splicing ligase complex. Interacts with FAM98A. In terms of tissue distribution, expressed strongly in colorectal cancer tissues compared to wild-type colon samples (at protein level). Expressed strongly in colorectal cancer tissues compared to wild-type colon samples.

The protein resides in the nucleus. The protein localises to the cytoplasm. Functionally, positively stimulates PRMT1-induced protein arginine dimethylated arginine methylation. The chain is Protein FAM98B (FAM98B) from Homo sapiens (Human).